Here is a 1388-residue protein sequence, read N- to C-terminus: MEDLMTSYSFTEKKRIRKDFGKQRSILEVPFLLAIQVDSYREFLQENVDPAKRTDHGLHAALKSVFPIASYSGNAALEYVGYKLGEPVFDERECRQRGMSYGAPLRVTVRLVIYDRESSTKAIKYVKEQEVYLGEIPLMTENGTFIVNGTERVIVSQLHRSPGVFFDHDRGKTHSSGKLLYSARIIPYRGSWLDFEFDPKDALFTRIDRRRKLPVSILLRALGYSNEEMLAEFFEINTFHINPDEGVQLELVPERLRGETLGFDLADGDKVIVEAGKRITARHIKQLEASGIAALAVPDDYIVGRILSHDVVDASTGELLAQANDEITDEQLQAFRKAGVDAVGTLWVNDLDRGPYLSNTLRIDPTKTQLEALVEIYRMMRPGEPPTKDAAQNLFHNLFFTFERYDLSAVGRMKFNRRVGRKETTGEAVLYDSKYFGERNDEESKRLVAAHGDSSDILDVIKVLTEIRNGRGVVDDIDHLGNRRVRSVGEMAENVFRVGLVRVERAVKERLSMAESEGLTPQELINAKPVAAAIKEFFGSSQLSQFMDQNNPLSEVTHKRRVSALGPGGLTRERAGFEVRDVHPTHYGRVCTIETPEGPNIGLINSLAVYARTNQYGFLETPYRKVVDGKVYDEVEFLSAIEENEYVIAQANALTDAKGTLTEQFVPCRFQGESLLKPPAEVHFMDVSPMQTVSIAAALVPFLEHDDANRALMGANMQRQAVPTLRAQKPLVGTGIERAVARDSGVTVNARRGGEIVQIDAARIVVKVNEEEIVGATDAGVDIYNLVKYTRSNQNTCINQRPLVQVGDVIARGDVLADGPSTDIGELALGQNMLIAFMPWNGYNFEDSILLSERVVEEDRYTTIHIEELTCVARDTKLGPEEISADIPNVSEQALNRLDESGVVYIGAEVRAGDIMVGKVTPKGESQLTPEEKLLRAIFGEKASDVKDSSLRVPPGMDGTVIDVQVFTRDGIEKDKRARQIEESEIKRVKKDFDDQFRILEAAIYMRLRSQIVGKVVNGGAGLKKGDVITDAFLDGLKKADWFALRMKDEDASEAIERAQKQIQAHEKEFERRFADKRGKITAGDDLAPGVLKMVKVFLAVKRRIQPGDKMAGRHGNKGVVSNVVPVEDMPYMASGETVDIVLNPLGVPSRMNIGQILEVHLGWAAKGLGRKIQAMMEAQAAVADLRKFLDDIYNHDDTNVANRVDLSQFSDEELLRLARNLTDGVPMATPVFDGATEAEIKRMLELADLPSSGQTQLYDGRTGEAFDRHTTVGYMHYLKLNHLVDDKMHARSTGPYSLVTQQPLGGKAQFGGQRFGEMEVWALEAYGAAYTLQEMLTVKSDDVQGRNQMYKNIVDGEHEMVAGMPESFNVLVKEIRSLAINMELEDN.

Belongs to the RNA polymerase beta chain family. As to quaternary structure, the RNAP catalytic core consists of 2 alpha, 1 beta, 1 beta' and 1 omega subunit. When a sigma factor is associated with the core the holoenzyme is formed, which can initiate transcription.

The catalysed reaction is RNA(n) + a ribonucleoside 5'-triphosphate = RNA(n+1) + diphosphate. Its function is as follows. DNA-dependent RNA polymerase catalyzes the transcription of DNA into RNA using the four ribonucleoside triphosphates as substrates. This chain is DNA-directed RNA polymerase subunit beta, found in Stenotrophomonas maltophilia (strain K279a).